Here is a 249-residue protein sequence, read N- to C-terminus: Small ribosomal subunit protein uS3 (249 aa).

In terms of domain architecture, KH type-2 spans 23-94 (LNEFFTRELS…TVELYAEKVQ (72 aa)). A phosphoserine mark is found at Ser-32, Ser-37, Ser-106, and Ser-141.

The protein belongs to the universal ribosomal protein uS3 family. Component of the small ribosomal subunit (SSU). Mature yeast ribosomes consist of a small (40S) and a large (60S) subunit. The 40S small subunit contains 1 molecule of ribosomal RNA (18S rRNA) and at least 33 different proteins. The large 60S subunit contains 3 rRNA molecules (25S, 5.8S and 5S rRNA) and at least 46 different proteins.

The protein resides in the cytoplasm. Component of the ribosome, a large ribonucleoprotein complex responsible for the synthesis of proteins in the cell. The small ribosomal subunit (SSU) binds messenger RNAs (mRNAs) and translates the encoded message by selecting cognate aminoacyl-transfer RNA (tRNA) molecules. The large subunit (LSU) contains the ribosomal catalytic site termed the peptidyl transferase center (PTC), which catalyzes the formation of peptide bonds, thereby polymerizing the amino acids delivered by tRNAs into a polypeptide chain. The nascent polypeptides leave the ribosome through a tunnel in the LSU and interact with protein factors that function in enzymatic processing, targeting, and the membrane insertion of nascent chains at the exit of the ribosomal tunnel. The protein is Small ribosomal subunit protein uS3 (rps3) of Schizosaccharomyces pombe (strain 972 / ATCC 24843) (Fission yeast).